A 447-amino-acid polypeptide reads, in one-letter code: Tubulin beta chain (447 aa).

Glutamine 11, glutamate 69, serine 138, glycine 142, threonine 143, glycine 144, asparagine 204, and asparagine 226 together coordinate GTP. A Mg(2+)-binding site is contributed by glutamate 69. The segment at 424–447 (QYQDAGVDEEEEEYEEEAPLEGEE) is disordered. A compositionally biased stretch (acidic residues) spans 429 to 447 (GVDEEEEEYEEEAPLEGEE).

The protein belongs to the tubulin family. Dimer of alpha and beta chains. A typical microtubule is a hollow water-filled tube with an outer diameter of 25 nm and an inner diameter of 15 nM. Alpha-beta heterodimers associate head-to-tail to form protofilaments running lengthwise along the microtubule wall with the beta-tubulin subunit facing the microtubule plus end conferring a structural polarity. Microtubules usually have 13 protofilaments but different protofilament numbers can be found in some organisms and specialized cells. It depends on Mg(2+) as a cofactor.

Its subcellular location is the cytoplasm. The protein resides in the cytoskeleton. Tubulin is the major constituent of microtubules, a cylinder consisting of laterally associated linear protofilaments composed of alpha- and beta-tubulin heterodimers. Microtubules grow by the addition of GTP-tubulin dimers to the microtubule end, where a stabilizing cap forms. Below the cap, tubulin dimers are in GDP-bound state, owing to GTPase activity of alpha-tubulin. The sequence is that of Tubulin beta chain (tub-2) from Neurospora crassa (strain ATCC 24698 / 74-OR23-1A / CBS 708.71 / DSM 1257 / FGSC 987).